The chain runs to 1328 residues: MPVVMARDLEETASSSEDEDLANQEDHPCIMWTGGCRRIPVLVFHAEAILTKDNNIRVIGERYHLSYKIVRTDSRLVRSILTAHGFHEVHPSSTDYNLMWTGSHLKPFLLRTLSEAQKVNHFPRSYELTRKDRLYKNIIRMQHTHGFKAFHILPQTFLLPAEYAEFCNSYSKDRGPWIVKPVASSRGRGVYLINNPNQISLEENILVSRYINNPLLIDDFKFDVRLYVLVTSYDPLVIYLYEEGLARFATVRYDQGSKNIRNQFMHLTNYSVNKKSGDYVSCDDPEVEDYGNKWSMSAMLRYLKQEGKDTTALMAHVEDLIIKTIISAELAIATACKTFVPHRSSCFELYGFDVLIDNTLKPWLLEVNLSPSLACDAPLDLKIKASMISDMFTVVGFVCQDPAQRTSNRSIYPSFESSRRNPFQKPQRTRPLSASDAEMKNLVASAREKVPGKLGGSVLGLSMEEIKVLRRVKEENDRRGGFIRIFPTSETWEIYGSYLEHKTSMNYMLATRLFQDRGNPRRSLLTGRARVSTEGAPELKVESMNSKAKLHAALYERKLLSLEVRKRRRRSGRLRAMRPKYPVIAQPAEMNIKTETESEEEEEVGLDNDDEEQEASQEESAGSLGENQAKYTPSLTVIVENSPRDNAMKVAEWTNKGEPCCKIEAQEPESKFNLMQILQDNGNLSKVQARLAFSAYLQHVQIRLTKDSGGQTLSPSWAAKEDEQMELVVRFLKRASSNLQHSLRMVLPSRRLALLERRRILAHQLGDFIGVYNKETEQMAEKKSKKKLEEEEEDGVNAESFQEFIRQASEAELEEVLTFYTQKNKSASVFLGTHSKSSKNSSSYSDSGAKGDHPETIQEVKIKQPKQQQATEIHADKLSRFTTSSGKEAKLVYTNCSSFCSPAAVLLQRLPSSHLSSVITTSALSAGPGHHASLSQIPPAVPSLPHQPALLLSPVPDNAPPSIHSGTQNVSPAGLPRCRSGSYTIGPFSSFQSAAHIYSQKLSRPSSAKAAGSCHPHKHHSGIAKTQKEGEDVSLNRRYNQSLVTAELQRLAEKQAARQYSPASHISLLTQQVTNLNLASSVINRSSASTPPTLRPVISPSGPTWSIQPDLHASETHSSPPGSRSLQTGGFAWEGEVENNAYSKTTGVVPQHKYHPTAGSYQLHFALQQLEQQKLQSRQLLDQSRARHQAIFGSQTLPNSSLWTMNNGPGCRISSATTGGQKPNTLPQKVVAPPNSSTLVSKPASNHKQVLRKPASQRASKGSSAEGQLNGLQSSLNPAAFMPITNSTGSLEAPQVIFARSKPLPTQSGALATVIGQRKSKSVKSGTI.

The tract at residues 1-22 (MPVVMARDLEETASSSEDEDLA) is disordered. Residues 62–407 (RYHLSYKIVR…VCQDPAQRTS (346 aa)) enclose the TTL domain. ATP contacts are provided by residues Lys-180, 186–187 (RG), 208–211 (SRYI), and 221–223 (KFD). Residue Arg-186 coordinates a protein. Arg-247 lines the L-glutamate pocket. 268-269 (TN) contacts ATP. The L-glutamate site is built by Tyr-270, Ser-271, and Lys-293. Mg(2+) contacts are provided by Asp-353, Glu-366, and Asn-368. Positions 378 to 488 (PLDLKIKASM…RGGFIRIFPT (111 aa)) are c-MTBD region. An L-glutamate-binding site is contributed by Lys-384. 7 disordered regions span residues 411–436 (IYPS…SASD), 585–631 (AQPA…QAKY), 834–853 (HSKS…KGDH), 948–975 (PALL…PAGL), 1006–1032 (SSAK…EGED), 1085–1129 (RSSA…LQTG), and 1212–1271 (RISS…QLNG). The span at 420–432 (RNPFQKPQRTRPL) shows a compositional bias: polar residues. The span at 597 to 617 (ESEEEEEVGLDNDDEEQEASQ) shows a compositional bias: acidic residues. Low complexity predominate over residues 838 to 847 (SKNSSSYSDS). Polar residues-rich tracts occupy residues 1116–1128 (THSS…SLQT), 1214–1227 (SSAT…NTLP), 1234–1248 (PNSS…SNHK), and 1257–1271 (QRAS…QLNG).

Belongs to the tubulin--tyrosine ligase family. As to quaternary structure, interacts with the transcriptional coactivators NCOA1/SRC-1 and NCOA2/TIF2. Mg(2+) is required as a cofactor. In terms of tissue distribution, highly expressed in brain, kidney, liver, spleen and testis. Expressed in heart, lung, muscle and trachea.

It localises to the cell projection. The protein resides in the cilium. It is found in the cytoplasm. The protein localises to the cytoskeleton. Its subcellular location is the cilium basal body. It localises to the nucleus. It catalyses the reaction L-glutamyl-[protein] + L-glutamate + ATP = gamma-L-glutamyl-L-glutamyl-[protein] + ADP + phosphate + H(+). The enzyme catalyses (L-glutamyl)(n)-gamma-L-glutamyl-L-glutamyl-[protein] + L-glutamate + ATP = (L-glutamyl)(n+1)-gamma-L-glutamyl-L-glutamyl-[protein] + ADP + phosphate + H(+). In terms of biological role, polyglutamylase which modifies tubulin, generating polyglutamate side chains on the gamma-carboxyl group of specific glutamate residues within the C-terminal tail of tubulin. Preferentially mediates ATP-dependent initiation step of the polyglutamylation reaction over the elongation step. Preferentially modifies the alpha-tubulin tail over a beta-tail. Required for CCSAP localization to both polyglutamylated spindle and cilia microtubules. Increases the effects of transcriptional coactivator NCOA2/TIF2 in glucocorticoid receptor-mediated repression and induction and in androgen receptor-mediated induction. This Mus musculus (Mouse) protein is Tubulin polyglutamylase TTLL5.